Reading from the N-terminus, the 47-residue chain is Large ribosomal subunit protein bL36B (47 aa).

This sequence belongs to the bacterial ribosomal protein bL36 family.

This chain is Large ribosomal subunit protein bL36B, found in Pectobacterium atrosepticum (strain SCRI 1043 / ATCC BAA-672) (Erwinia carotovora subsp. atroseptica).